A 419-amino-acid chain; its full sequence is Tol-Pal system protein TolB (419 aa).

The signal sequence occupies residues 1-19 (MFNRIISLFLLLFTGQVIA).

Belongs to the TolB family. As to quaternary structure, the Tol-Pal system is composed of five core proteins: the inner membrane proteins TolA, TolQ and TolR, the periplasmic protein TolB and the outer membrane protein Pal. They form a network linking the inner and outer membranes and the peptidoglycan layer.

The protein localises to the periplasm. In terms of biological role, part of the Tol-Pal system, which plays a role in outer membrane invagination during cell division and is important for maintaining outer membrane integrity. This chain is Tol-Pal system protein TolB, found in Legionella pneumophila (strain Corby).